We begin with the raw amino-acid sequence, 166 residues long: Glycine cleavage system H protein 3, mitochondrial (166 aa).

Residues 1 to 35 constitute a mitochondrion transit peptide; sequence MALRMWASSTANALKLSSSASKSHLLPAFSISRCF. A Lipoyl-binding domain is found at 57 to 139; sequence VATIGITDHA…YEDGWMIKVK (83 aa). An N6-lipoyllysine modification is found at Lys98. A Phosphoserine modification is found at Ser141.

This sequence belongs to the GcvH family. As to quaternary structure, the glycine cleavage system is composed of four proteins: P, T, L and H. (R)-lipoate is required as a cofactor. Post-translationally, S-nitrosylated and/or glutathionylated at unknown positions in response to nitric oxide.

Its subcellular location is the mitochondrion. With respect to regulation, inhibited by harpin, S-nitrosoglutathione (GSNO), nitric oxide, N-ethylmaleimide and 5,5'-dithiobis-(2-nitrobenzoic acid). In terms of biological role, the glycine decarboxylase (GDC) or glycine cleavage system catalyzes the degradation of glycine. The H protein shuttles the methylamine group of glycine from the P protein to the T protein. This chain is Glycine cleavage system H protein 3, mitochondrial (GDH3), found in Arabidopsis thaliana (Mouse-ear cress).